The following is a 405-amino-acid chain: 8-amino-7-oxononanoate synthase 2 (405 aa).

Arginine 20 provides a ligand contact to substrate. Pyridoxal 5'-phosphate is bound at residue glycine 116 to tyrosine 117. Histidine 141 contacts substrate. Pyridoxal 5'-phosphate is bound by residues serine 187, histidine 215, and threonine 243. Residue lysine 246 is modified to N6-(pyridoxal phosphate)lysine. Threonine 369 serves as a coordination point for substrate.

The protein belongs to the class-II pyridoxal-phosphate-dependent aminotransferase family. BioF subfamily. In terms of assembly, homodimer. Pyridoxal 5'-phosphate is required as a cofactor.

It carries out the reaction 6-carboxyhexanoyl-[ACP] + L-alanine + H(+) = (8S)-8-amino-7-oxononanoate + holo-[ACP] + CO2. It functions in the pathway cofactor biosynthesis; biotin biosynthesis. Catalyzes the decarboxylative condensation of pimeloyl-[acyl-carrier protein] and L-alanine to produce 8-amino-7-oxononanoate (AON), [acyl-carrier protein], and carbon dioxide. The sequence is that of 8-amino-7-oxononanoate synthase 2 from Polaromonas sp. (strain JS666 / ATCC BAA-500).